The following is a 456-amino-acid chain: Two pore potassium channel c (456 aa).

Over residues Met-1–Pro-19 the composition is skewed to low complexity. A disordered region spans residues Met-1–Gly-112. The Cytoplasmic segment spans residues Met-1 to Pro-152. Pro residues predominate over residues His-52–Pro-67. Residues Ala-153–Tyr-173 traverse the membrane as a helical segment. The pore-forming intramembrane region spans Asp-192–Pro-211. The helical transmembrane segment at Phe-223 to Leu-243 threads the bilayer. Over Asp-244–Arg-279 the chain is Cytoplasmic. The helical transmembrane segment at Met-280–Leu-300 threads the bilayer. The pore-forming intramembrane region spans Asp-310 to Phe-329. A helical membrane pass occupies residues Leu-336–Leu-356. Over Ala-357–Ser-456 the chain is Cytoplasmic. 2 consecutive EF-hand domains span residues Leu-373–Lys-408 and Lys-412–Leu-447. The Ca(2+) site is built by Asp-386, Asp-388, Asn-390, Tyr-392, Glu-397, Asp-425, Lys-431, and Asp-436.

It belongs to the two pore domain potassium channel (TC 1.A.1.7) family. Homodimer.

It localises to the membrane. Its function is as follows. Inward-rectifying potassium channel. This is Two pore potassium channel c (TPKC) from Oryza sativa subsp. japonica (Rice).